A 244-amino-acid chain; its full sequence is 5-oxoprolinase subunit A (244 aa).

Belongs to the LamB/PxpA family. Forms a complex composed of PxpA, PxpB and PxpC.

The catalysed reaction is 5-oxo-L-proline + ATP + 2 H2O = L-glutamate + ADP + phosphate + H(+). Catalyzes the cleavage of 5-oxoproline to form L-glutamate coupled to the hydrolysis of ATP to ADP and inorganic phosphate. This chain is 5-oxoprolinase subunit A, found in Escherichia coli O7:K1 (strain IAI39 / ExPEC).